The following is a 474-amino-acid chain: Dipeptidase A (474 aa).

The active site involves Cys-6.

It belongs to the peptidase C69 family. Homooctamer.

The enzyme catalyses an L-aminoacyl-L-amino acid + H2O = 2 an L-alpha-amino acid. With respect to regulation, inhibited by Zn(2+), Cu(2+), Ca(2+) and Cd(2+). Hydrolyzes a wide range of dipeptides but unable to hydrolyze dipeptides containing proline. Highest activity against Met-Ala. In Lactobacillus helveticus (Lactobacillus suntoryeus), this protein is Dipeptidase A (pepDA).